Here is a 466-residue protein sequence, read N- to C-terminus: MNNSTNSSNSGLALTSPYKTFEVVFIVLVAGSLSLVTIIGNILVMVSIKVNRHLQTVNNYFLFSLACADLIIGVFSMNLYTLYTVIGYWPLGPVVCDLWLALDYVVSNASVMNLLIISFDRYFCVTKPLTYPVKRTTKMAGMMIAAAWVLSFILWAPAILFWQFIVGVRTVEDGECYIQFFSNAAVTFGTAIAAFYLPVIIMTVLYWHISRASKSRIKKDKKEPVANQEPVSPSLVQGRIVKPNNNNMPGSDEALEHNKIQNGKAPRDAVTENCVQGEEKESSNDSTSVSAVASNMRDDEITQDENTVSTSLGHSKDENSKQTCIKIVTKTQKSDSCTPANTTVELVGSSGQNGDEKQNIVARKIVKMTKQPAKKKPPPSREKKVTRTILAILLAFIITWAPYNVMVLINTFCAPCIPNTVWTIGYWLCYINSTINPACYALCNATFKKTFKHLLMCHYKNIGATR.

The Extracellular segment spans residues Met1–Glu22. 3 N-linked (GlcNAc...) asparagine glycosylation sites follow: Asn2, Asn3, and Asn6. A helical transmembrane segment spans residues Val23–Met45. Residues Val46–Asn59 are Cytoplasmic-facing. The helical transmembrane segment at Tyr60–Tyr80 threads the bilayer. Residues Thr81–Asp97 lie on the Extracellular side of the membrane. Cys96 and Cys176 are oxidised to a cystine. A helical membrane pass occupies residues Leu98 to Phe119. The Important for signaling motif lies at Asp120–Tyr122. Topologically, residues Asp120–Met139 are cytoplasmic. Residues Ala140–Trp162 traverse the membrane as a helical segment. The Extracellular portion of the chain corresponds to Gln163–Ala184. A helical membrane pass occupies residues Ala185–Ile209. The Cytoplasmic segment spans residues Ser210 to Arg387. Positions Lys218–Ser320 are disordered. Ser232 carries the phosphoserine modification. Basic and acidic residues predominate over residues Ala254 to Val270. Polar residues-rich tracts occupy residues Asn284–Ala293 and Asp304–Gly313. The chain crosses the membrane as a helical span at residues Thr388 to Asn410. Topologically, residues Thr411–Pro418 are extracellular. The cysteines at positions 413 and 416 are disulfide-linked. The helical transmembrane segment at Asn419 to Leu442 threads the bilayer. Residues Asn436–Tyr440 carry the Important for signaling motif. The Cytoplasmic segment spans residues Cys443 to Arg466. Residues Thr446, Thr450, and Thr465 each carry the phosphothreonine modification.

This sequence belongs to the G-protein coupled receptor 1 family. Muscarinic acetylcholine receptor subfamily. CHRM2 sub-subfamily. Interacts with ARRB1 and ARRB2. Interacts with RACK1; the interaction regulates CHRM2 internalization. Post-translationally, phosphorylated in response to agonist treatment.

It is found in the cell membrane. Its subcellular location is the postsynaptic cell membrane. Functionally, the muscarinic acetylcholine receptor mediates various cellular responses, including inhibition of adenylate cyclase, breakdown of phosphoinositides and modulation of potassium channels through the action of G proteins. Primary transducing effect is adenylate cyclase inhibition. This Sus scrofa (Pig) protein is Muscarinic acetylcholine receptor M2 (CHRM2).